Reading from the N-terminus, the 256-residue chain is Nuclear shuttle protein (256 aa).

Positions 1-53 are disordered; that stretch reads MYPSRNKRGSYFNQRRQYSRNHVWKRPTAAKRHDWKRRPSNTSKPNDEPKMSA. The span at 17–39 shows a compositional bias: basic residues; it reads QYSRNHVWKRPTAAKRHDWKRRP. The short motif at 21–42 is the Bipartite nuclear localization signal element; that stretch reads NHVWKRPTAAKRHDWKRRPSNT. The Nuclear localization signal motif lies at 81-96; the sequence is DLGRSEPNRSRSYIRL. An interaction with Arabidopsis thaliana NSI protein region spans residues 150-187; the sequence is ELFGARIHSHGNLSVTPALKDRYYIRHVCKRVLSVEKD.

It belongs to the begomovirus nuclear shuttle protein family. In terms of assembly, binds to single-stranded and double-stranded viral DNA. Interacts with the host nuclear shuttle interacting (NSI) protein. This interaction may allow NSP to recruit NSI monomers to the viral genome and thus regulate nuclear export of viral genome by NSP.

It localises to the host nucleus. The protein resides in the host cytoplasm. It is found in the host cell membrane. Binds to the genomic viral ssDNA, shuttles it into and out of the cell nucleus. Begomoviruses use 2 proteins to transport their DNA from cell to cell. The nuclear shuttle protein (NSP) shuttles it between nucleus and cytoplasm and the movement protein (MP) probably transports the DNA-NSP complex to the cell periphery and facilitates movement across the cell wall. This is Nuclear shuttle protein from Abutilon mosaic virus (isolate West India) (AbMV).